We begin with the raw amino-acid sequence, 871 residues long: Alanine--tRNA ligase (871 aa).

Positions 561, 565, 665, and 669 each coordinate Zn(2+).

It belongs to the class-II aminoacyl-tRNA synthetase family. The cofactor is Zn(2+).

Its subcellular location is the cytoplasm. The enzyme catalyses tRNA(Ala) + L-alanine + ATP = L-alanyl-tRNA(Ala) + AMP + diphosphate. Its function is as follows. Catalyzes the attachment of alanine to tRNA(Ala) in a two-step reaction: alanine is first activated by ATP to form Ala-AMP and then transferred to the acceptor end of tRNA(Ala). Also edits incorrectly charged Ser-tRNA(Ala) and Gly-tRNA(Ala) via its editing domain. This is Alanine--tRNA ligase from Dehalococcoides mccartyi (strain CBDB1).